The sequence spans 502 residues: 1-aminocyclopropane-1-carboxylate synthase-like protein 1 (502 aa).

The tract at residues 15 to 35 (CPGSDSIQDLPSNKGDGLERE) is disordered. Glutamate 106 is a binding site for substrate. Lysine 324 is modified (N6-(pyridoxal phosphate)lysine).

The protein belongs to the class-I pyridoxal-phosphate-dependent aminotransferase family.

Functionally, does not catalyze the synthesis of 1-aminocyclopropane-1-carboxylate but is capable of catalyzing the deamination of L-vinylglycine. The protein is 1-aminocyclopropane-1-carboxylate synthase-like protein 1 (ACCS) of Bos taurus (Bovine).